The chain runs to 284 residues: Proline-rich protein 32 (284 aa).

3 disordered regions span residues arginine 59–histidine 80, glutamate 97–glutamine 119, and serine 143–proline 171.

This is Proline-rich protein 32 (Prr32) from Mus musculus (Mouse).